Here is a 443-residue protein sequence, read N- to C-terminus: uncharacterized protein (443 aa).

This is an uncharacterized protein from Mycoplasma genitalium (strain ATCC 33530 / DSM 19775 / NCTC 10195 / G37) (Mycoplasmoides genitalium).